The primary structure comprises 397 residues: Dual specificity mitogen-activated protein kinase kinase 2 (397 aa).

The tract at residues 1–21 (MAPKRRPVPLIIAPTGEGQST) is disordered. The 298-residue stretch at 69–366 (FDPICELGAG…LKMLMGHTFI (298 aa)) folds into the Protein kinase domain. ATP-binding positions include 75-83 (LGAGNGGVV) and Lys98. Catalysis depends on Asp191, which acts as the Proton acceptor. Phosphoserine; by RAF is present on residues Ser219 and Ser223. A disordered region spans residues 284 to 306 (GGAEGHSMSPRQRPPGRPVSGHG).

Belongs to the protein kinase superfamily. STE Ser/Thr protein kinase family. MAP kinase kinase subfamily. Post-translationally, phosphorylation on Ser/Thr by MAP kinase kinase kinases (RAF) positively regulates the kinase activity.

It catalyses the reaction L-seryl-[protein] + ATP = O-phospho-L-seryl-[protein] + ADP + H(+). The enzyme catalyses L-threonyl-[protein] + ATP = O-phospho-L-threonyl-[protein] + ADP + H(+). It carries out the reaction L-tyrosyl-[protein] + ATP = O-phospho-L-tyrosyl-[protein] + ADP + H(+). Its function is as follows. Catalyzes the concomitant phosphorylation of a threonine and a tyrosine residue in a Thr-Glu-Tyr sequence located in MAP kinases. The polypeptide is Dual specificity mitogen-activated protein kinase kinase 2 (map2k2) (Cyprinus carpio (Common carp)).